The primary structure comprises 197 residues: NADH-quinone oxidoreductase subunit C (197 aa).

This sequence belongs to the complex I 30 kDa subunit family. In terms of assembly, NDH-1 is composed of 14 different subunits. Subunits NuoB, C, D, E, F, and G constitute the peripheral sector of the complex.

Its subcellular location is the cell inner membrane. The catalysed reaction is a quinone + NADH + 5 H(+)(in) = a quinol + NAD(+) + 4 H(+)(out). NDH-1 shuttles electrons from NADH, via FMN and iron-sulfur (Fe-S) centers, to quinones in the respiratory chain. The immediate electron acceptor for the enzyme in this species is believed to be ubiquinone. Couples the redox reaction to proton translocation (for every two electrons transferred, four hydrogen ions are translocated across the cytoplasmic membrane), and thus conserves the redox energy in a proton gradient. In Neisseria meningitidis serogroup B (strain ATCC BAA-335 / MC58), this protein is NADH-quinone oxidoreductase subunit C.